The sequence spans 108 residues: UPF0102 protein Sbal_4100 (108 aa).

Belongs to the UPF0102 family.

This is UPF0102 protein Sbal_4100 from Shewanella baltica (strain OS155 / ATCC BAA-1091).